A 119-amino-acid chain; its full sequence is Large ribosomal subunit protein uL14c (119 aa).

Belongs to the universal ribosomal protein uL14 family. In terms of assembly, part of the 50S ribosomal subunit.

The protein localises to the plastid. It localises to the chloroplast. Its function is as follows. Binds to 23S rRNA. This Ostreococcus tauri protein is Large ribosomal subunit protein uL14c.